The chain runs to 175 residues: Catabolic 3-dehydroquinase (175 aa).

Residue Tyr-23 is the Proton acceptor of the active site. The substrate site is built by Asn-74, His-80, and Asp-87. His-100 (proton donor) is an active-site residue. Residues 101-102 (IS) and Arg-111 each bind substrate.

It belongs to the type-II 3-dehydroquinase family. Homododecamer. Adopts a ring-like structure, composed of an arrangement of two hexameric rings stacked on top of one another.

The enzyme catalyses 3-dehydroquinate = 3-dehydroshikimate + H2O. The protein operates within aromatic compound metabolism; 3,4-dihydroxybenzoate biosynthesis; 3,4-dihydroxybenzoate from 3-dehydroquinate: step 1/2. Is involved in the catabolism of quinate. Allows the utilization of quinate as carbon source via the beta-ketoadipate pathway. The polypeptide is Catabolic 3-dehydroquinase (Talaromyces marneffei (strain ATCC 18224 / CBS 334.59 / QM 7333) (Penicillium marneffei)).